Reading from the N-terminus, the 51-residue chain is MTTSSNRPTPGGPTQPVSYPVFTVRWLAVHALTVPTIFFLGALAAMQFIQR.

The helical transmembrane segment at 26–42 (WLAVHALTVPTIFFLGA) threads the bilayer. Position 30 (His-30) interacts with heme.

Belongs to the PsbE/PsbF family. Heterodimer of an alpha subunit and a beta subunit. PSII is composed of 1 copy each of membrane proteins PsbA, PsbB, PsbC, PsbD, PsbE, PsbF, PsbH, PsbI, PsbJ, PsbK, PsbL, PsbM, PsbT, PsbX, Psb30/Ycf12, peripheral proteins PsbO, CyanoQ (PsbQ), PsbU, PsbV and a large number of cofactors. It forms dimeric complexes. Requires heme b as cofactor.

The protein resides in the cell inner membrane. Its function is as follows. This b-type cytochrome is tightly associated with the reaction center of photosystem II (PSII). PSII is a light-driven water:plastoquinone oxidoreductase that uses light energy to abstract electrons from H(2)O, generating O(2) and a proton gradient subsequently used for ATP formation. It consists of a core antenna complex that captures photons, and an electron transfer chain that converts photonic excitation into a charge separation. The sequence is that of Cytochrome b559 subunit beta from Gloeobacter violaceus (strain ATCC 29082 / PCC 7421).